Consider the following 284-residue polypeptide: Bifunctional protein FolD (284 aa).

NADP(+) is bound by residues 165 to 167 (GRS) and Ser190.

This sequence belongs to the tetrahydrofolate dehydrogenase/cyclohydrolase family. Homodimer.

It carries out the reaction (6R)-5,10-methylene-5,6,7,8-tetrahydrofolate + NADP(+) = (6R)-5,10-methenyltetrahydrofolate + NADPH. It catalyses the reaction (6R)-5,10-methenyltetrahydrofolate + H2O = (6R)-10-formyltetrahydrofolate + H(+). Its pathway is one-carbon metabolism; tetrahydrofolate interconversion. In terms of biological role, catalyzes the oxidation of 5,10-methylenetetrahydrofolate to 5,10-methenyltetrahydrofolate and then the hydrolysis of 5,10-methenyltetrahydrofolate to 10-formyltetrahydrofolate. This is Bifunctional protein FolD from Streptococcus uberis (strain ATCC BAA-854 / 0140J).